Here is a 260-residue protein sequence, read N- to C-terminus: Uroplakin-1b (260 aa).

Topologically, residues 1–15 (MAKDDSTVRCFQGLL) are cytoplasmic. A helical membrane pass occupies residues 16 to 36 (IFGHVIVGMCGIALTAECIFF). The Extracellular portion of the chain corresponds to 37 to 59 (VSDQHSLYPLLEATNNDDIFGAA). The chain crosses the membrane as a helical span at residues 60–80 (WIGMFVGICLFCLSVLAIVGI). The Cytoplasmic segment spans residues 81 to 86 (MKSNRK). A helical membrane pass occupies residues 87-107 (ILLAYFIMMFIVYGFEVASCI). Residues 108–229 (TAATQRDFFT…ELISGPMDRH (122 aa)) lie on the Extracellular side of the membrane. Residues 230-250 (AWGVAWFGFAILCWTFWVLLG) form a helical membrane-spanning segment. The Cytoplasmic portion of the chain corresponds to 251–260 (TMFYWSRIEY).

Belongs to the tetraspanin (TM4SF) family. Heterodimer with uroplakin-3A (UPK3A) or uroplakin-3B (UPK3B). In terms of processing, N-glycosylated with high-mannose oligosaccharides.

It localises to the membrane. Functionally, component of the asymmetric unit membrane (AUM); a highly specialized biomembrane elaborated by terminally differentiated urothelial cells. May play an important role in normal bladder epithelial physiology, possibly in regulating membrane permeability of superficial umbrella cells or in stabilizing the apical membrane through AUM/cytoskeletal interactions. The sequence is that of Uroplakin-1b (Upk1b) from Rattus norvegicus (Rat).